Here is a 283-residue protein sequence, read N- to C-terminus: MMNEVLLKFKQLDLSPYIQPLPEKPAEKLKVYGIDGAYVADIEAPLHFLEPIRPDLIRRAYLSALSARFQPKGVYEGAGKEHSCESFGVGLGIARIPRYKGSLWPRGCFAPNTRGGRRAHPPKVEKKLHEEINKKEKKLAIRSAIAATAYRSWVAARGHVVEKVPSLPVVVVGDAEKINRAKEAKKLFEALGLWPDVERAAEGVKIRAGKGKMRGRRYKEPKSVLVVVSDLNAPLIAAVRNFPGVDVVAVNNLNILVLAPGGVPGRLTLWTAPAVEKLRGLFL.

This sequence belongs to the universal ribosomal protein uL4 family. As to quaternary structure, part of the 50S ribosomal subunit.

In terms of biological role, one of the primary rRNA binding proteins, this protein initially binds near the 5'-end of the 23S rRNA. It is important during the early stages of 50S assembly. It makes multiple contacts with different domains of the 23S rRNA in the assembled 50S subunit and ribosome. Forms part of the polypeptide exit tunnel. This chain is Large ribosomal subunit protein uL4, found in Pyrobaculum aerophilum (strain ATCC 51768 / DSM 7523 / JCM 9630 / CIP 104966 / NBRC 100827 / IM2).